We begin with the raw amino-acid sequence, 340 residues long: Nod factor export ATP-binding protein I (340 aa).

Positions 1–24 (MLKRKLGPEDLRRLETPAIERESH) are enriched in basic and acidic residues. A disordered region spans residues 1 to 34 (MLKRKLGPEDLRRLETPAIERESHGQTSAKSSVP). Polar residues predominate over residues 25–34 (GQTSAKSSVP). One can recognise an ABC transporter domain in the interval 42-272 (VDFAGVTKSY…HIGCQVMEIY (231 aa)). Residue 74-81 (GPNGAGKS) coordinates ATP.

Belongs to the ABC transporter superfamily. Lipooligosaccharide exporter (TC 3.A.1.102) family. As to quaternary structure, the complex is composed of two ATP-binding proteins (NodI) and two transmembrane proteins (NodJ).

The protein localises to the cell inner membrane. Functionally, part of the ABC transporter complex NodIJ involved in the export of the nodulation factors (Nod factors), the bacterial signal molecules that induce symbiosis and subsequent nodulation induction. Nod factors are LCO (lipo-chitin oligosaccharide), a modified beta-1,4-linked N-acetylglucosamine oligosaccharide. This subunit is responsible for energy coupling to the transport system. The protein is Nod factor export ATP-binding protein I of Mesorhizobium japonicum (strain LMG 29417 / CECT 9101 / MAFF 303099) (Mesorhizobium loti (strain MAFF 303099)).